Consider the following 301-residue polypeptide: Putative glycosyltransferase MJ1113 (301 aa).

A run of 8 helical transmembrane segments spans residues 2-22 (GHYF…SAVL), 62-82 (FIPF…IIGI), 95-115 (LILL…NSYV), 117-137 (LIEI…TNML), 140-160 (FNGL…LVLF), 164-184 (YTTG…LLIF), 191-211 (VFPG…LAVV), and 280-300 (VTVL…ISLI).

This sequence belongs to the glycosyltransferase 4 family.

The protein localises to the cell membrane. In Methanocaldococcus jannaschii (strain ATCC 43067 / DSM 2661 / JAL-1 / JCM 10045 / NBRC 100440) (Methanococcus jannaschii), this protein is Putative glycosyltransferase MJ1113.